The sequence spans 888 residues: Protein sey1 (888 aa).

Positions 1–24 (MDMATSNINGHGDRPSPAARFPTA) are disordered. The Cytoplasmic portion of the chain corresponds to 1–771 (MDMATSNING…KRSAIGGVAQ (771 aa)). The region spanning 76–315 (GFNYHLISVF…FEGGVFLPEY (240 aa)) is the GB1/RHD3-type G domain. A GTP-binding site is contributed by 86-93 (GSQSTGKS). The disordered stretch occupies residues 703–723 (GNTPASVDPKDEEDLTPIGGV). Over residues 712–723 (KDEEDLTPIGGV) the composition is skewed to acidic residues. A coiled-coil region spans residues 724–745 (DEEEGKSLEEEMTVLSEAKRQD). The chain crosses the membrane as a helical span at residues 772-792 (VPLYFYGLLLALGWNEIVAVL). Residues 793-795 (RNP) are Lumenal-facing. The helical transmembrane segment at 796–816 (IYFVFLILCGVAGYVTYTLNL) threads the bilayer. Residues 817–888 (WGPIIRMLNA…VREDEDVDEI (72 aa)) lie on the Cytoplasmic side of the membrane.

This sequence belongs to the TRAFAC class dynamin-like GTPase superfamily. GB1/RHD3 GTPase family. RHD3 subfamily.

The protein resides in the endoplasmic reticulum membrane. Functionally, cooperates with the reticulon proteins and tubule-shaping DP1 family proteins to generate and maintain the structure of the tubular endoplasmic reticulum network. Has GTPase activity, which is required for its function in ER organization. The protein is Protein sey1 (sey1) of Sclerotinia sclerotiorum (strain ATCC 18683 / 1980 / Ss-1) (White mold).